Here is a 190-residue protein sequence, read N- to C-terminus: Small ribosomal subunit protein eS7B (190 aa).

Residue Ser-2 is modified to N-acetylserine. Ser-10 and Ser-31 each carry phosphoserine. Residues Lys-83 and Lys-84 each participate in a glycyl lysine isopeptide (Lys-Gly) (interchain with G-Cter in ubiquitin) cross-link.

It belongs to the eukaryotic ribosomal protein eS7 family. In terms of assembly, component of the small ribosomal subunit (SSU). Mature yeast ribosomes consist of a small (40S) and a large (60S) subunit. The 40S small subunit contains 1 molecule of ribosomal RNA (18S rRNA) and 33 different proteins (encoded by 57 genes). The large 60S subunit contains 3 rRNA molecules (25S, 5.8S and 5S rRNA) and 46 different proteins (encoded by 81 genes). Interacts with snoRNA U3. uS11 interacts with MPP10. Component of the ribosomal small subunit (SSU) processome composed of at least 40 protein subunits and snoRNA U3. Post-translationally, N-terminally acetylated by acetyltransferase NatA. In terms of processing, ubiquitinated at Lys-83 and Lys-84 in response to stalled ribosomes, leading to activation of the No-Go Decay (NGD) pathway: first monoubiquitinated by MOT2/NOT4, followed by formation by HEL2 of 'Lys-63'-linked polyubiquitin chains on monoubiquitin.

The protein localises to the cytoplasm. Its subcellular location is the nucleus. It is found in the nucleolus. In terms of biological role, component of the ribosome, a large ribonucleoprotein complex responsible for the synthesis of proteins in the cell. The small ribosomal subunit (SSU) binds messenger RNAs (mRNAs) and translates the encoded message by selecting cognate aminoacyl-transfer RNA (tRNA) molecules. The large subunit (LSU) contains the ribosomal catalytic site termed the peptidyl transferase center (PTC), which catalyzes the formation of peptide bonds, thereby polymerizing the amino acids delivered by tRNAs into a polypeptide chain. The nascent polypeptides leave the ribosome through a tunnel in the LSU and interact with protein factors that function in enzymatic processing, targeting, and the membrane insertion of nascent chains at the exit of the ribosomal tunnel. eS7 is involved in nucleolar processing of pre-18S ribosomal RNA and ribosome assembly. The chain is Small ribosomal subunit protein eS7B from Saccharomyces cerevisiae (strain ATCC 204508 / S288c) (Baker's yeast).